Reading from the N-terminus, the 163-residue chain is MIIESISGNIHDLPGEDLEDVHVESVVLPLADLTKRIQRVRSDHGTELGIRLAPGAPDLREGDILLRNERGIVVVRLEPTDVLVIAPVTVREMGVVAHNLGNRHLPAQFFGPAEPFPGLEGHDGVMVIQYDHTAEHYLEHLGVRHARMERSMPVPFRHAEHTH.

It belongs to the UreE family.

It is found in the cytoplasm. Its function is as follows. Involved in urease metallocenter assembly. Binds nickel. Probably functions as a nickel donor during metallocenter assembly. This chain is Urease accessory protein UreE, found in Actinomyces naeslundii.